A 335-amino-acid chain; its full sequence is Ketol-acid reductoisomerase (NADP(+)) 2 (335 aa).

The 180-residue stretch at 1 to 180 folds into the KARI N-terminal Rossmann domain; it reads MKTYYEQDAN…GCTRAGVIET (180 aa). NADP(+) is bound by residues 24–27, R47, S51, and 81–84; these read YGSQ and DEQQ. Residue H106 is part of the active site. G132 lines the NADP(+) pocket. Residues 181-326 enclose the KARI C-terminal knotted domain; it reads TFQEETETDL…EELREMMSWI (146 aa). Residues D189, E193, E225, and E229 each coordinate Mg(2+). S250 contributes to the substrate binding site.

This sequence belongs to the ketol-acid reductoisomerase family. Mg(2+) is required as a cofactor.

The enzyme catalyses (2R)-2,3-dihydroxy-3-methylbutanoate + NADP(+) = (2S)-2-acetolactate + NADPH + H(+). It catalyses the reaction (2R,3R)-2,3-dihydroxy-3-methylpentanoate + NADP(+) = (S)-2-ethyl-2-hydroxy-3-oxobutanoate + NADPH + H(+). It functions in the pathway amino-acid biosynthesis; L-isoleucine biosynthesis; L-isoleucine from 2-oxobutanoate: step 2/4. It participates in amino-acid biosynthesis; L-valine biosynthesis; L-valine from pyruvate: step 2/4. Functionally, involved in the biosynthesis of branched-chain amino acids (BCAA). Catalyzes an alkyl-migration followed by a ketol-acid reduction of (S)-2-acetolactate (S2AL) to yield (R)-2,3-dihydroxy-isovalerate. In the isomerase reaction, S2AL is rearranged via a Mg-dependent methyl migration to produce 3-hydroxy-3-methyl-2-ketobutyrate (HMKB). In the reductase reaction, this 2-ketoacid undergoes a metal-dependent reduction by NADPH to yield (R)-2,3-dihydroxy-isovalerate. This Bacillus anthracis protein is Ketol-acid reductoisomerase (NADP(+)) 2.